Reading from the N-terminus, the 384-residue chain is 1-deoxy-D-xylulose 5-phosphate reductoisomerase (384 aa).

Thr10, Gly11, Ser12, Ile13, Gly36, Asn38, and Asn122 together coordinate NADPH. Lys123 contributes to the 1-deoxy-D-xylulose 5-phosphate binding site. NADPH is bound at residue Glu124. Mn(2+) is bound at residue Asp148. 4 residues coordinate 1-deoxy-D-xylulose 5-phosphate: Ser149, Glu150, Ser174, and His197. Glu150 contacts Mn(2+). Gly203 contributes to the NADPH binding site. The 1-deoxy-D-xylulose 5-phosphate site is built by Ser210, Asn215, Lys216, and Glu219. Glu219 is a binding site for Mn(2+).

It belongs to the DXR family. Mg(2+) serves as cofactor. Mn(2+) is required as a cofactor.

The enzyme catalyses 2-C-methyl-D-erythritol 4-phosphate + NADP(+) = 1-deoxy-D-xylulose 5-phosphate + NADPH + H(+). It functions in the pathway isoprenoid biosynthesis; isopentenyl diphosphate biosynthesis via DXP pathway; isopentenyl diphosphate from 1-deoxy-D-xylulose 5-phosphate: step 1/6. Its function is as follows. Catalyzes the NADPH-dependent rearrangement and reduction of 1-deoxy-D-xylulose-5-phosphate (DXP) to 2-C-methyl-D-erythritol 4-phosphate (MEP). This is 1-deoxy-D-xylulose 5-phosphate reductoisomerase from Geobacter metallireducens (strain ATCC 53774 / DSM 7210 / GS-15).